The following is a 521-amino-acid chain: Probable cytosol aminopeptidase (521 aa).

Mn(2+) is bound by residues K268 and D273. K280 is a catalytic residue. Positions 291, 350, and 352 each coordinate Mn(2+). R354 is a catalytic residue.

Belongs to the peptidase M17 family. Requires Mn(2+) as cofactor.

It is found in the cytoplasm. It carries out the reaction Release of an N-terminal amino acid, Xaa-|-Yaa-, in which Xaa is preferably Leu, but may be other amino acids including Pro although not Arg or Lys, and Yaa may be Pro. Amino acid amides and methyl esters are also readily hydrolyzed, but rates on arylamides are exceedingly low.. It catalyses the reaction Release of an N-terminal amino acid, preferentially leucine, but not glutamic or aspartic acids.. Functionally, presumably involved in the processing and regular turnover of intracellular proteins. Catalyzes the removal of unsubstituted N-terminal amino acids from various peptides. This is Probable cytosol aminopeptidase from Chromobacterium violaceum (strain ATCC 12472 / DSM 30191 / JCM 1249 / CCUG 213 / NBRC 12614 / NCIMB 9131 / NCTC 9757 / MK).